Here is a 67-residue protein sequence, read N- to C-terminus: Sec-independent protein translocase protein TatA (67 aa).

A helical transmembrane segment spans residues methionine 1 to glycine 21.

It belongs to the TatA/E family. The Tat system comprises two distinct complexes: a TatABC complex, containing multiple copies of TatA, TatB and TatC subunits, and a separate TatA complex, containing only TatA subunits. Substrates initially bind to the TatABC complex, which probably triggers association of the separate TatA complex to form the active translocon.

It localises to the cell inner membrane. Part of the twin-arginine translocation (Tat) system that transports large folded proteins containing a characteristic twin-arginine motif in their signal peptide across membranes. TatA could form the protein-conducting channel of the Tat system. This is Sec-independent protein translocase protein TatA from Ruthia magnifica subsp. Calyptogena magnifica.